A 267-amino-acid polypeptide reads, in one-letter code: Deoxyribose-phosphate aldolase (267 aa).

Asp123 acts as the Proton donor/acceptor in catalysis. Lys185 (schiff-base intermediate with acetaldehyde) is an active-site residue. Catalysis depends on Lys217, which acts as the Proton donor/acceptor.

Belongs to the DeoC/FbaB aldolase family. DeoC type 1 subfamily.

It is found in the cytoplasm. The catalysed reaction is 2-deoxy-D-ribose 5-phosphate = D-glyceraldehyde 3-phosphate + acetaldehyde. Its pathway is carbohydrate degradation; 2-deoxy-D-ribose 1-phosphate degradation; D-glyceraldehyde 3-phosphate and acetaldehyde from 2-deoxy-alpha-D-ribose 1-phosphate: step 2/2. Catalyzes a reversible aldol reaction between acetaldehyde and D-glyceraldehyde 3-phosphate to generate 2-deoxy-D-ribose 5-phosphate. In Coccidioides immitis (strain RS) (Valley fever fungus), this protein is Deoxyribose-phosphate aldolase.